The sequence spans 122 residues: MSITKEQILEAISEMSVMNVVDLITAMEEKFGVSASMSINSNNHNEKDLREEKTEFDIFLKVIGPNKVSVIKTVRSATGLGLKEAKDLVESAPTVLKENISKEDAESLKKTLEDVGAEIEIK.

This sequence belongs to the bacterial ribosomal protein bL12 family. As to quaternary structure, homodimer. Part of the ribosomal stalk of the 50S ribosomal subunit. Forms a multimeric L10(L12)X complex, where L10 forms an elongated spine to which 2 to 4 L12 dimers bind in a sequential fashion. Binds GTP-bound translation factors.

Functionally, forms part of the ribosomal stalk which helps the ribosome interact with GTP-bound translation factors. Is thus essential for accurate translation. In Buchnera aphidicola subsp. Acyrthosiphon pisum (strain Tuc7), this protein is Large ribosomal subunit protein bL12.